The following is an 813-amino-acid chain: Acyl-homoserine lactone acylase QuiP (813 aa).

Positions 1–26 (MAAPAFPPFRLRFATAATLLGMLGLA) are cleaved as a signal peptide. Serine 262 functions as the Nucleophile in the catalytic mechanism.

The protein belongs to the peptidase S45 family. As to quaternary structure, heterodimer of an alpha subunit and a beta subunit processed from the same precursor.

The protein resides in the periplasm. The enzyme catalyses an N-acyl-L-homoserine lactone + H2O = L-homoserine lactone + a carboxylate. Its function is as follows. Catalyzes the deacylation of acyl-homoserine lactone (AHL or acyl-HSL), releasing homoserine lactone (HSL) and the corresponding fatty acid. Possesses a specificity for the degradation of long-chain acyl-HSLs (side chains of seven or more carbons in length). The protein is Acyl-homoserine lactone acylase QuiP (quiP) of Pseudomonas putida (strain ATCC 47054 / DSM 6125 / CFBP 8728 / NCIMB 11950 / KT2440).